The primary structure comprises 140 residues: ATP synthase epsilon chain (140 aa).

It belongs to the ATPase epsilon chain family. In terms of assembly, F-type ATPases have 2 components, CF(1) - the catalytic core - and CF(0) - the membrane proton channel. CF(1) has five subunits: alpha(3), beta(3), gamma(1), delta(1), epsilon(1). CF(0) has three main subunits: a, b and c.

It is found in the cell inner membrane. Its function is as follows. Produces ATP from ADP in the presence of a proton gradient across the membrane. This is ATP synthase epsilon chain (atpC) from Vibrio alginolyticus.